The primary structure comprises 87 residues: Small ribosomal subunit protein uS17 (87 aa).

It belongs to the universal ribosomal protein uS17 family. Part of the 30S ribosomal subunit.

Functionally, one of the primary rRNA binding proteins, it binds specifically to the 5'-end of 16S ribosomal RNA. This is Small ribosomal subunit protein uS17 from Alcanivorax borkumensis (strain ATCC 700651 / DSM 11573 / NCIMB 13689 / SK2).